Here is an 89-residue protein sequence, read N- to C-terminus: UPF0223 protein BCB4264_A4064 (89 aa).

This sequence belongs to the UPF0223 family.

The chain is UPF0223 protein BCB4264_A4064 from Bacillus cereus (strain B4264).